Consider the following 863-residue polypeptide: Adenosylcobalamin biosynthesis bifunctional protein CobDQ (863 aa).

Positions 1-373 (MNLPEHGGNL…LKSRKKTPSI (373 aa)) are putative threonine-phosphate decarboxylase. Residues 6–7 (HG), asparagine 30, and asparagine 159 contribute to the O-phospho-L-threonine site. Position 214 is an N6-(pyridoxal phosphate)lysine (lysine 214). O-phospho-L-threonine-binding residues include arginine 323 and arginine 337. The tract at residues 374-863 (MFQGTASNVG…NLIYRKLGLG (490 aa)) is cobyric acid synthase. Residues 622-810 (RLDVVLIDIP…IHGIFDKDEF (189 aa)) enclose the GATase cobBQ-type domain. Cysteine 704 serves as the catalytic Nucleophile. Histidine 802 is a catalytic residue.

The protein in the N-terminal section; belongs to the class-II pyridoxal-phosphate-dependent aminotransferase family. It in the C-terminal section; belongs to the CobB/CobQ family. CobQ subfamily. Pyridoxal 5'-phosphate is required as a cofactor.

The enzyme catalyses O-phospho-L-threonine + H(+) = (R)-1-aminopropan-2-yl phosphate + CO2. It functions in the pathway cofactor biosynthesis; adenosylcobalamin biosynthesis. Functionally, catalyzes two activities which are involved in the adenosylcobalamin biosynthesis: decarboxylates L-threonine-O-3-phosphate to yield (R)-1-amino-2-propanol O-2-phosphate, the precursor for the linkage between the nucleotide loop and the corrin ring in cobalamin, and catalyzes amidations at positions B, D, E, and G on adenosylcobyrinic A,C-diamide. NH(2) groups are provided by glutamine, and one molecule of ATP is hydrogenolyzed for each amidation. In Leptospira interrogans serogroup Icterohaemorrhagiae serovar Lai (strain 56601), this protein is Adenosylcobalamin biosynthesis bifunctional protein CobDQ (cobDQ).